A 544-amino-acid chain; its full sequence is MAELTIKPEEIRAALDSFVNSYEPSASAREEVGRVTLAADGIAEVEGLPGAMANELLQFEDGTLGLALNLDVRHIGVVVLGEFTGIEEGQEVRRTGEVLSVPVGDGYLGRVVDPLGNPIDGLGDVETEGRRALELQAPGVMARKSVHEPLQTGIKAIDSMIPIGRGQRQLIIGDRQTGKTAIAIDTILNQKANWDSGDPSKQVRCVYVAIGQKGSTIASVRGALEDAGALEYTTIVAAPASDPAGFKYLAPYTGSAIGQHWMYQGKHVLIVFDDLSKQAEAYRAVSLLLRRPPGREAYPGDVFYLHSRLLERCAKLSDELGAGSMTGLPIIETKANDVSAYIPTNVISITDGQIFLQSDLFNANQRPAVDVGISVSRVGGDAQVKGMKKVSGTLKLELAQYRSLEAFAMFASDLDAASRAQLKRGAALTELLKQPQYSPFAVEDQVAMIWSGTNGYLDDVETADIHRFESELLDHLRRHTSVLDDIASSGLLTDETEEALRNGVESFRRTFAGSDGQIIGGGEPESDGEDVDVEQEQIVRQKRG.

Residue 173–180 (GDRQTGKT) coordinates ATP. Residues 513 to 544 (GSDGQIIGGGEPESDGEDVDVEQEQIVRQKRG) form a disordered region. The span at 524–535 (PESDGEDVDVEQ) shows a compositional bias: acidic residues.

Belongs to the ATPase alpha/beta chains family. F-type ATPases have 2 components, CF(1) - the catalytic core - and CF(0) - the membrane proton channel. CF(1) has five subunits: alpha(3), beta(3), gamma(1), delta(1), epsilon(1). CF(0) has three main subunits: a(1), b(2) and c(9-12). The alpha and beta chains form an alternating ring which encloses part of the gamma chain. CF(1) is attached to CF(0) by a central stalk formed by the gamma and epsilon chains, while a peripheral stalk is formed by the delta and b chains.

It localises to the cell membrane. It carries out the reaction ATP + H2O + 4 H(+)(in) = ADP + phosphate + 5 H(+)(out). In terms of biological role, produces ATP from ADP in the presence of a proton gradient across the membrane. The alpha chain is a regulatory subunit. In Beutenbergia cavernae (strain ATCC BAA-8 / DSM 12333 / CCUG 43141 / JCM 11478 / NBRC 16432 / NCIMB 13614 / HKI 0122), this protein is ATP synthase subunit alpha.